The primary structure comprises 614 residues: Glucose oxidase 1 (614 aa).

An N-terminal signal peptide occupies residues 1–15 (MKSIILSCFVISAAA). 3 residues coordinate FAD: Leu52, Thr53, and Glu73. N-linked (GlcNAc...) asparagine glycosylation occurs at Asn112. The segment at 117-136 (IRSGNGLGGSTLTNGGSWTR) is disordered. The FAD site is built by Ser126, Asn130, Gly131, and Ser133. Residues Asn184 and Asn191 are each glycosylated (N-linked (GlcNAc...) asparagine). The cysteines at positions 187 and 229 are disulfide-linked. Residue Val273 coordinates FAD. Residues Asn279, Asn383, and Asn416 are each glycosylated (N-linked (GlcNAc...) asparagine). Catalysis depends on His544, which acts as the Proton acceptor. Residues Arg565 and Val566 each coordinate O2. The FAD site is built by Gly577 and Met589.

The protein belongs to the GMC oxidoreductase family. As to quaternary structure, homodimer. Requires FAD as cofactor.

Its subcellular location is the secreted. It localises to the cell wall. The protein localises to the cytoplasm. It is found in the extracellular space. The protein resides in the extracellular matrix. The enzyme catalyses beta-D-glucose + O2 = D-glucono-1,5-lactone + H2O2. Functionally, glucose oxidase catalyzes the oxidation of beta-D-glucose to D-glucono-delta-lactone and hydrogen peroxide in the presence of molecular oxygen. The chain is Glucose oxidase 1 from Penicillium expansum (Blue mold rot fungus).